A 726-amino-acid chain; its full sequence is Catalase-peroxidase (726 aa).

The tract at residues 1 to 33 is disordered; sequence MSTSDDIHNTTATGKCPFHQGGHDQSAGAGTTT. A cross-link (tryptophyl-tyrosyl-methioninium (Trp-Tyr) (with M-252)) is located at residues 105–226; the sequence is WHGAGTYRSI…LGATEMGLIY (122 aa). The active-site Proton acceptor is the His-106. A cross-link (tryptophyl-tyrosyl-methioninium (Tyr-Met) (with W-105)) is located at residues 226-252; it reads YVNPEGPDHSGEPLSAAAAIRATFGNM. His-267 lines the heme b pocket.

It belongs to the peroxidase family. Peroxidase/catalase subfamily. In terms of assembly, homodimer or homotetramer. Requires heme b as cofactor. In terms of processing, formation of the three residue Trp-Tyr-Met cross-link is important for the catalase, but not the peroxidase activity of the enzyme.

It carries out the reaction H2O2 + AH2 = A + 2 H2O. The enzyme catalyses 2 H2O2 = O2 + 2 H2O. Bifunctional enzyme with both catalase and broad-spectrum peroxidase activity. The protein is Catalase-peroxidase of Shigella sonnei (strain Ss046).